The primary structure comprises 149 residues: Large ribosomal subunit protein bL9 (149 aa).

Belongs to the bacterial ribosomal protein bL9 family.

Functionally, binds to the 23S rRNA. The sequence is that of Large ribosomal subunit protein bL9 from Helicobacter pylori (strain P12).